The following is a 1083-amino-acid chain: Chitin synthase 2 (1083 aa).

Basic and acidic residues-rich tracts occupy residues 1-10 and 18-30; these read MSSEREERTF and DDVRENISNENQE. 2 disordered regions span residues 1–248 and 260–294; these read MSSE…IADD and DDDVFAPESDLSDARPHPVDRSSYMSSESQDTLNE. Residue Asn-23 is glycosylated (N-linked (GlcNAc...) asparagine). 2 stretches are compositionally biased toward polar residues: residues 38–49 and 61–70; these read SYASSMAESQTL and AKLQNKNRTS. A glycan (N-linked (GlcNAc...) asparagine) is linked at Asn-67. Basic and acidic residues-rich tracts occupy residues 78–100 and 117–128; these read LPRDLPEIPDGISDRRRVHKEQQ and RLRDVNSHDKLP. 3 stretches are compositionally biased toward polar residues: residues 132–148, 177–191, and 282–292; these read SPRNLNYQPSVRSSRSG, RPWTPSSRVSGFTRS, and SYMSSESQDTL. An N-linked (GlcNAc...) asparagine glycan is attached at Asn-417. Helical transmembrane passes span 708–728, 747–767, 785–805, 820–840, 860–880, 889–909, 987–1007, and 1020–1040; these read WLNGAFFAAVYSLVHFKQIWF, FIQLMFTFFSLANFYLTFYFV, TVIFHILRYACVLLISTQFIL, ISMIIYSIIMVYTTFATFYII, NMIVSILSTIGMYFIMSILYL, SAQYFILLPSYICTLQVYAFC, YLVLTWMIGNGILGMAVSEIY, and FLLWSVAALAVFRAIGSTTFA.

Belongs to the chitin synthase family. Class II subfamily.

Its subcellular location is the cell membrane. The enzyme catalyses [(1-&gt;4)-N-acetyl-beta-D-glucosaminyl](n) + UDP-N-acetyl-alpha-D-glucosamine = [(1-&gt;4)-N-acetyl-beta-D-glucosaminyl](n+1) + UDP + H(+). Functionally, polymerizes chitin, a structural polymer of the cell wall and septum, by transferring the sugar moiety of UDP-GlcNAc to the non-reducing end of the growing chitin polymer. Plays a critical role in cell wall integrity and virulence. The polypeptide is Chitin synthase 2 (Fusarium oxysporum f. sp. lycopersici (strain 4287 / CBS 123668 / FGSC 9935 / NRRL 34936) (Fusarium vascular wilt of tomato)).